A 563-amino-acid polypeptide reads, in one-letter code: Mitochondrial distribution and morphology protein 34 (563 aa).

The 195-residue stretch at 1 to 195 (MAFNFNWSPL…LPAIIHRLSL (195 aa)) folds into the SMP-LTD domain. Disordered stretches follow at residues 298-499 (ERGD…PHTP) and 531-563 (ARRQ…PKAL). Polar residues-rich tracts occupy residues 303 to 332 (AGTT…FSNR) and 346 to 357 (SLVNMNSATTGL). The segment covering 365 to 383 (SRSHPTRKKKNRVVNLRKP) has biased composition (basic residues). Low complexity predominate over residues 386 to 407 (TESSESGESETASTTAVSEPTV). Polar residues-rich tracts occupy residues 458-471 (PSLT…INTQ) and 478-488 (YNQSASTSYTP). The segment covering 531–540 (ARRQHDDKTA) has biased composition (basic and acidic residues).

The protein belongs to the MDM34 family. Component of the ER-mitochondria encounter structure (ERMES) or MDM complex, composed of MMM1, MDM10, MDM12 and MDM34.

Its subcellular location is the mitochondrion outer membrane. Component of the ERMES/MDM complex, which serves as a molecular tether to connect the endoplasmic reticulum (ER) and mitochondria. Components of this complex are involved in the control of mitochondrial shape and protein biogenesis, and function in nonvesicular lipid trafficking between the ER and mitochondria. MDM34 is required for the interaction of the ER-resident membrane protein MMM1 and the outer mitochondrial membrane-resident beta-barrel protein MDM10. This Botryotinia fuckeliana (strain B05.10) (Noble rot fungus) protein is Mitochondrial distribution and morphology protein 34.